Consider the following 1322-residue polypeptide: Sal-like protein 1 (1322 aa).

The tract at residues 1-41 (MSRRKQAKPQHFQSDPEVASLPRRDGDTEKGQPSRPTKSKD) is disordered. Basic and acidic residues predominate over residues 22-41 (PRRDGDTEKGQPSRPTKSKD). Residues 43–65 (HVCGRCCAEFFELSDLLLHKKSC) form a C2H2-type 1; atypical zinc finger. Residues 78–128 (PASPAKTFPPGPSLNDPDDQMKDAANKADQEDCSDLSEPKGLDREESMEVE) are disordered. 2 stretches are compositionally biased toward basic and acidic residues: residues 96 to 107 (DQMKDAANKADQ) and 114 to 124 (SEPKGLDREES). A Glycyl lysine isopeptide (Lys-Gly) (interchain with G-Cter in SUMO2) cross-link involves residue Lys-440. C2H2-type zinc fingers lie at residues 450 to 472 (HKCR…LRSH) and 478 to 500 (FKCN…FQRH). The interval 578–659 (PIPISHSAAS…GGPGGTTFTN (82 aa)) is disordered. Over residues 584 to 594 (SAASPQGSVKS) the composition is skewed to polar residues. Residues Ser-591, Ser-594, and Ser-596 each carry the phosphoserine modification. Residues 629 to 645 (NMASSAVPTAGNSTLNS) are compositionally biased toward polar residues. Residues Lys-672, Lys-689, and Lys-700 each participate in a glycyl lysine isopeptide (Lys-Gly) (interchain with G-Cter in SUMO2) cross-link. 3 consecutive C2H2-type zinc fingers follow at residues 705-727 (NECI…YRTH), 733-755 (FKCK…YSVH), and 765-787 (HSCP…IRMH). Disordered regions lie at residues 789–855 (GGQI…SSPL) and 891–961 (SMEG…GLSP). Over residues 819–832 (DLDNFSDENMEECP) the composition is skewed to acidic residues. The span at 842–855 (SADASQDSLSSSPL) shows a compositional bias: low complexity. Over residues 898 to 935 (TNDSSSVGGDMESQSAGSPAISESTSSMQALSPSNSTQ) the composition is skewed to polar residues. Residues 936–948 (EFHKSPGMEEKPQ) are compositionally biased toward basic and acidic residues. Phosphoserine is present on Ser-940. Glycyl lysine isopeptide (Lys-Gly) (interchain with G-Cter in SUMO2) cross-links involve residues Lys-946 and Lys-981. 2 consecutive C2H2-type zinc fingers follow at residues 1000-1022 (TACD…YRSH) and 1028-1050 (FICT…MLTH). A Glycyl lysine isopeptide (Lys-Gly) (interchain with G-Cter in SUMO2) cross-link involves residue Lys-1085. A disordered region spans residues 1094–1119 (VSPQDSKDAPTSHVPQGPLSSSATSP). 2 consecutive C2H2-type zinc fingers follow at residues 1133-1155 (HYCN…ERTH) and 1161-1183 (FACT…MGTH). Glycyl lysine isopeptide (Lys-Gly) (interchain with G-Cter in SUMO2) cross-links involve residues Lys-1218, Lys-1297, and Lys-1317.

It belongs to the sal C2H2-type zinc-finger protein family. In terms of assembly, may associate with NuRD histone deacetylase complex (HDAC). Interacts with components of HDAC complex including HDAC1, HDAC2, RBBP4, RBPP7, MTA1 and MTA2. Interacts with CCNQ. Interacts with NSD2 (via PHD-type zinc fingers 1, 2 and 3). In terms of tissue distribution, expressed in the metanephric mesenchyme surrounding ureteric bud.

The protein resides in the nucleus. Functionally, transcriptional repressor involved in organogenesis. Plays an essential role in ureteric bud invasion during kidney development. This is Sal-like protein 1 (Sall1) from Mus musculus (Mouse).